The chain runs to 2647 residues: Filamin-A (2647 aa).

Positions 1-15 (MSSSHSRAGQSAAGA) are enriched in low complexity. Positions 1-39 (MSSSHSRAGQSAAGAAPGGGVDTRDAEMPATEKDLAEDA) are disordered. Position 2 is an N-acetylserine (Ser-2). Residues 2–274 (SSSHSRAGQS…PKAKLKPGAP (273 aa)) are actin-binding. A Phosphoserine modification is found at Ser-11. Over residues 22–39 (DTRDAEMPATEKDLAEDA) the composition is skewed to basic and acidic residues. Residues Lys-42, Lys-43, and Lys-135 each participate in a glycyl lysine isopeptide (Lys-Gly) (interchain with G-Cter in ubiquitin) cross-link. 2 consecutive Calponin-homology (CH) domains span residues 43 to 149 (KIQQ…LHYS) and 166 to 269 (QTPK…KAKL). The interval 271-294 (PGAPLRPKLNPKKARAYGPGIEPT) is disordered. 15 Filamin repeats span residues 276–374 (RPKL…EVYV), 376–474 (KSQG…TVTV), 475–570 (GQAC…EVKV), 571–663 (GTEC…MADI), 667–763 (PQDF…RVNV), 764–866 (GAGS…RVKV), 867–965 (EPSH…SVAV), 966–1061 (SPSL…PLEA), 1062–1154 (VAPT…KAHV), 1155–1249 (VPCF…KLQV), 1250–1349 (EPAV…QVPV), 1350–1442 (TEGC…KVPV), 1443–1539 (HDVT…KVKV), 1540–1636 (LPTH…RVRA), and 1649–1740 (VSIG…QVTA). Lys-299 is covalently cross-linked (Glycyl lysine isopeptide (Lys-Gly) (interchain with G-Cter in SUMO1); alternate). Lys-299 participates in a covalent cross-link: Glycyl lysine isopeptide (Lys-Gly) (interchain with G-Cter in SUMO2); alternate. N6-acetyllysine occurs at positions 376 and 508. 5 positions are modified to N6-acetyllysine: Lys-700, Lys-781, Lys-837, Lys-865, and Lys-906. Ser-968 and Ser-1055 each carry phosphoserine. Lys-1071 is subject to N6-acetyllysine; alternate. Lys-1071 is subject to N6-succinyllysine; alternate. Phosphoserine is present on residues Ser-1081 and Ser-1084. Thr-1089 carries the phosphothreonine modification. Ser-1301 and Ser-1338 each carry phosphoserine. The disordered stretch occupies residues 1361–1382 (HGPGIQSGTTNKPNKFTVETRG). The residue at position 1372 (Lys-1372) is an N6-acetyllysine. Phosphoserine occurs at positions 1459 and 1533. Residues 1490–1607 (PKGLVEPVDV…DNHDGTYTVA (118 aa)) form an interaction with furin region. At Lys-1538 the chain carries N6-acetyllysine. A phosphoserine mark is found at Ser-1630 and Ser-1734. Residues 1741 to 1778 (LAGDQPSVQPPLRSQQLAPQYTYAQGGQQTWAPERPLV) are hinge 1. 8 Filamin repeats span residues 1779–1860 (GVNG…QFYV), 1861–1950 (DYVN…PFTA), 1951–2039 (RVTG…PVVI), 2042–2131 (SEIG…SPFS), 2132–2230 (VKVT…QFTV), 2233–2325 (LGEG…VVPV), 2327–2420 (SPSG…KIRV), and 2424–2516 (GHGG…KAKV). Ser-1835 carries the phosphoserine modification. Residues Ser-1967, Ser-2053, Ser-2128, Ser-2152, Ser-2158, Ser-2163, Ser-2180, Ser-2284, Ser-2327, and Ser-2329 each carry the phosphoserine modification. A Phosphothreonine modification is found at Thr-2336. Phosphoserine occurs at positions 2338, 2370, 2414, 2510, 2523, and 2526. The segment at 2517-2551 (TGPRLVSNHSLHETSSVFVDSLTKATCAPQHGAPG) is hinge 2. Positions 2517-2647 (TGPRLVSNHS…PGSPYRVVVP (131 aa)) are self-association site, tail. The Filamin 24 repeat unit spans residues 2552-2646 (PGPADASKVV…IPGSPYRVVV (95 aa)). An N6-acetyllysine; alternate modification is found at Lys-2569. Lys-2569 is modified (N6-succinyllysine; alternate). The residue at position 2575 (Lys-2575) is an N6-acetyllysine. The residue at position 2599 (Thr-2599) is a Phosphothreonine. 2 positions are modified to N6-acetyllysine: Lys-2607 and Lys-2621.

This sequence belongs to the filamin family. As to quaternary structure, homodimer. Interacts with PDLIM2. Interacts with RFLNA and RFLNB. Interacts with FCGR1A, FLNB, FURIN, HSPB7, INPPL1, KCND2, MYOT, MYOZ1, ARHGAP24, PSEN1, PSEN2 and ECSCR. Also interacts with various other binding partners in addition to filamentous actin. Interacts (via N-terminus) with MIS18BP1 (via N-terminus). Interacts (via N-terminus) with TAF1B. Interacts with TMEM67 (via C-terminus) and MKS1. Interacts (via actin-binding domain) with MICALL2 (via CH domain). Interacts (via filamin repeat 5) with SYK; docks SYK to the plasma membrane. Interacts (via filamin repeats 19 and 21) with DRD3; increased PKA-mediated phosphorylation at Ser-2152. Interacts (via filamin repeat 21) with MAS1, AGTR1 and ADRA1D; increases PKA-mediated phosphorylation of FLNA at Ser-2152. Interacts (via filamin repeats 4, 9, 12, 17, 19, 21, and 23) with GP1BA (high affinity), ITGB7, ITGB2 and FBLIM1. Interacts with CEACAM1 (via cytoplasmic domain); inhibits cell migration and cell scattering by interfering with the interaction between FLNA and RALA. Interacts with FOXC1. Interacts (via calponin-homology (CH) domain 1 and filamin repeat 24) with CRMP1; the interaction alters FLNA ternary structure and thus promotes FLNA dissociation from F-actin. Interacts with DPYSL3/CRMP3 and DPYSL4/CRMP4. In terms of assembly, interacts with integrin ITGB1 isoform 1/beta-1A and isoform 5/beta-1D. Interacts with LUZP1; the interaction is not necessary for colocalization of LUZP1 with F-actin. Post-translationally, phosphorylation at Ser-2152 is negatively regulated by the autoinhibited conformation of filamin repeats 19-21. Ligand binding induces a conformational switch triggering phosphorylation at Ser-2152 by PKA. In terms of processing, phosphorylation extent changes in response to cell activation. Polyubiquitination in the CH1 domain by a SCF-like complex containing ASB2 leads to proteasomal degradation. Prior dissociation from actin may be required to expose the target lysines. Ubiquitinated in endothelial cells by RNF213 downstream of the non-canonical Wnt signaling pathway, leading to its degradation by the proteasome. Ubiquitous.

It is found in the cytoplasm. Its subcellular location is the cell cortex. It localises to the cytoskeleton. The protein localises to the perikaryon. The protein resides in the cell projection. It is found in the growth cone. Its subcellular location is the podosome. Functionally, promotes orthogonal branching of actin filaments and links actin filaments to membrane glycoproteins. Anchors various transmembrane proteins to the actin cytoskeleton and serves as a scaffold for a wide range of cytoplasmic signaling proteins. Interaction with FLNB may allow neuroblast migration from the ventricular zone into the cortical plate. Tethers cell surface-localized furin, modulates its rate of internalization and directs its intracellular trafficking. Involved in ciliogenesis. Plays a role in cell-cell contacts and adherens junctions during the development of blood vessels, heart and brain organs. Plays a role in platelets morphology through interaction with SYK that regulates ITAM- and ITAM-like-containing receptor signaling, resulting in by platelet cytoskeleton organization maintenance. During the axon guidance process, required for growth cone collapse induced by SEMA3A-mediated stimulation of neurons. This chain is Filamin-A (FLNA), found in Homo sapiens (Human).